A 483-amino-acid chain; its full sequence is GTPase Der (483 aa).

EngA-type G domains follow at residues 3 to 167 and 212 to 387; these read FTVA…GEER and LRIA…EIWN. GTP-binding positions include 9–16, 56–60, 119–122, 218–225, 265–269, and 330–333; these read GRPNVGKS, DTAGL, NKAE, GRPNAGKS, and NKWD. The region spanning 388–472 is the KH-like domain; it reads RRVSTGRLNR…PIRLSLRTSD (85 aa).

Belongs to the TRAFAC class TrmE-Era-EngA-EngB-Septin-like GTPase superfamily. EngA (Der) GTPase family. As to quaternary structure, associates with the 50S ribosomal subunit.

Its function is as follows. GTPase that plays an essential role in the late steps of ribosome biogenesis. In Brucella anthropi (strain ATCC 49188 / DSM 6882 / CCUG 24695 / JCM 21032 / LMG 3331 / NBRC 15819 / NCTC 12168 / Alc 37) (Ochrobactrum anthropi), this protein is GTPase Der.